Here is a 316-residue protein sequence, read N- to C-terminus: Ornithine carbamoyltransferase (316 aa).

Residues 57–60 (STRT), Gln84, Arg108, and 135–138 (HPCQ) contribute to the carbamoyl phosphate site. Residues Asn166, Asp230, and 234–235 (SM) each bind L-ornithine. Residues 269–270 (CL) and Arg297 each bind carbamoyl phosphate.

This sequence belongs to the aspartate/ornithine carbamoyltransferase superfamily. OTCase family.

The protein resides in the cytoplasm. It carries out the reaction carbamoyl phosphate + L-ornithine = L-citrulline + phosphate + H(+). It functions in the pathway amino-acid biosynthesis; L-arginine biosynthesis; L-arginine from L-ornithine and carbamoyl phosphate: step 1/3. Reversibly catalyzes the transfer of the carbamoyl group from carbamoyl phosphate (CP) to the N(epsilon) atom of ornithine (ORN) to produce L-citrulline. This is Ornithine carbamoyltransferase from Bacillus cereus (strain ZK / E33L).